Consider the following 511-residue polypeptide: PRLFALHHSATQYFSAAALPSPIPNPDIPDNQLFISNKWHDAVSKKTFPTVSPATGEVIGHVAEGDWADVDLAAKAARAAFRLGSPWRWMDALKRGWLLNHLADLVERDCVYLASLESLDNGKPFQESYVLDLDEVIKVYRYFAGWADKWHGKTIPMDGEHFCFTRHEPVGVCCQIIPWNFPLVMQSWKLALALAMGNTVVTKVAEQTPFSALYLASLIKEVGLPPGLVNIVTGYGPTAGAAIAHHMDIGKVAFTGSTKVGHLIQKAAGNSSLKRVTLELGGKSLSIVLADADMDHAVEQRQEALFFNMGQCCCPGSWTFIEESIYDEFLERTVEKAKQRRVGNPFDLDTQQGPQVDRERFERILGYIQLGQKEGAKLLCGGEHFRQQCFFIKPTVFGGVQDDMRIAREEIFGPVQPLFKFKKIEEVIERADNTRYGLAAAVFTQDLDKAMYFTQALQTGTVWVNTYNVVTCHTPLGGFKEPGNGRELGEDGLKAYTEVKTVTIKVPQKNS.

The N-terminal 11 residues, 1–11, are a transit peptide targeting the mitochondrion; that stretch reads PRLFALHHSAT. Lys-45 is modified (N6-acetyllysine). N6-acetyllysine; alternate is present on Lys-46. Lys-46 carries the N6-succinyllysine; alternate modification. Lys-75 is subject to N6-succinyllysine. 256 to 261 is a binding site for NAD(+); the sequence is GSTKVG. The active-site Proton acceptor is Glu-279. Cys-313 functions as the Nucleophile in the catalytic mechanism. N6-acetyllysine; alternate occurs at positions 377, 393, and 420. Residues Lys-377, Lys-393, and Lys-420 each carry the N6-succinyllysine; alternate modification. Lys-423 carries the post-translational modification N6-acetyllysine.

Belongs to the aldehyde dehydrogenase family. In terms of assembly, homotetramer.

The protein resides in the mitochondrion matrix. The catalysed reaction is an aldehyde + NAD(+) + H2O = a carboxylate + NADH + 2 H(+). Its pathway is alcohol metabolism; ethanol degradation; acetate from ethanol: step 2/2. Its function is as follows. ALDHs play a major role in the detoxification of alcohol-derived acetaldehyde. They are involved in the metabolism of corticosteroids, biogenic amines, neurotransmitters, and lipid peroxidation. In the cornea, this enzyme may help in the absorption of the damaging UV-B, as well as in the detoxification of the UV-induced peroxidic aldehydes. This is Aldehyde dehydrogenase X, mitochondrial (ALDH1B1) from Bos taurus (Bovine).